The sequence spans 313 residues: Methionyl-tRNA formyltransferase (313 aa).

A (6S)-5,6,7,8-tetrahydrofolate-binding site is contributed by 109 to 112; it reads SLLP.

The protein belongs to the Fmt family.

The enzyme catalyses L-methionyl-tRNA(fMet) + (6R)-10-formyltetrahydrofolate = N-formyl-L-methionyl-tRNA(fMet) + (6S)-5,6,7,8-tetrahydrofolate + H(+). Functionally, attaches a formyl group to the free amino group of methionyl-tRNA(fMet). The formyl group appears to play a dual role in the initiator identity of N-formylmethionyl-tRNA by promoting its recognition by IF2 and preventing the misappropriation of this tRNA by the elongation apparatus. The chain is Methionyl-tRNA formyltransferase from Thermotoga maritima (strain ATCC 43589 / DSM 3109 / JCM 10099 / NBRC 100826 / MSB8).